A 382-amino-acid chain; its full sequence is Alkane 1-monooxygenase 1 (382 aa).

The next 4 membrane-spanning stretches (helical) occupy residues 10-30, 43-63, 90-110, and 121-141; these read MLAI…SMPF, FWAF…DMLF, LATV…FVAF, and WILS…HELI. Residues H138 and H142 each coordinate Fe cation. Residues 146–166 form a helical membrane-spanning segment; sequence ALEQAAGGILLAAVCYAGFKV. Positions 168, 172, and 173 each coordinate Fe cation. A helical transmembrane segment spans residues 236 to 256; the sequence is LALLVGFGWAFGWLGMVFFLG. Fe cation is bound by residues H312, H315, and H316.

The protein belongs to the fatty acid desaturase type 1 family. AlkB subfamily. Fe(3+) is required as a cofactor.

It is found in the cell inner membrane. It catalyses the reaction octane + 2 reduced [rubredoxin] + O2 + 2 H(+) = 2 oxidized [rubredoxin] + octan-1-ol + H2O. It functions in the pathway hydrocarbon metabolism; alkane degradation. Its function is as follows. Catalyzes the hydroxylation of n-alkanes in the presence of a NADH-rubredoxin reductase and rubredoxin. It preferably hydroxylases C16-C24 hydrocarbons. The polypeptide is Alkane 1-monooxygenase 1 (alkB1) (Pseudomonas aeruginosa (strain ATCC 15692 / DSM 22644 / CIP 104116 / JCM 14847 / LMG 12228 / 1C / PRS 101 / PAO1)).